Reading from the N-terminus, the 440-residue chain is Thymidine phosphorylase (440 aa).

The protein belongs to the thymidine/pyrimidine-nucleoside phosphorylase family. As to quaternary structure, homodimer.

The catalysed reaction is thymidine + phosphate = 2-deoxy-alpha-D-ribose 1-phosphate + thymine. The protein operates within pyrimidine metabolism; dTMP biosynthesis via salvage pathway; dTMP from thymine: step 1/2. The enzymes which catalyze the reversible phosphorolysis of pyrimidine nucleosides are involved in the degradation of these compounds and in their utilization as carbon and energy sources, or in the rescue of pyrimidine bases for nucleotide synthesis. This chain is Thymidine phosphorylase, found in Salmonella heidelberg (strain SL476).